The sequence spans 300 residues: Recombination-associated protein RdgC (300 aa).

This sequence belongs to the RdgC family.

The protein resides in the cytoplasm. It is found in the nucleoid. May be involved in recombination. In Herminiimonas arsenicoxydans, this protein is Recombination-associated protein RdgC.